Consider the following 335-residue polypeptide: Fructose-1,6-bisphosphatase class 1 (335 aa).

Mg(2+) is bound by residues Glu-92, Asp-114, Leu-116, and Asp-117. Substrate-binding positions include 117–120 (DGSS), Asn-209, and Lys-275. Glu-281 lines the Mg(2+) pocket.

The protein belongs to the FBPase class 1 family. In terms of assembly, homotetramer. It depends on Mg(2+) as a cofactor.

It is found in the cytoplasm. It catalyses the reaction beta-D-fructose 1,6-bisphosphate + H2O = beta-D-fructose 6-phosphate + phosphate. The protein operates within carbohydrate biosynthesis; gluconeogenesis. This chain is Fructose-1,6-bisphosphatase class 1, found in Paracidovorax citrulli (strain AAC00-1) (Acidovorax citrulli).